The following is a 249-amino-acid chain: Chymase (249 aa).

Positions 1 to 19 are cleaved as a signal peptide; the sequence is MHCLPLTLLLLLLCSRAEA. A propeptide spans 20–21 (activation peptide); that stretch reads EE. The Peptidase S1 domain maps to 22–245; that stretch reads IIGGTESKPH…YRPWINKVLK (224 aa). A disulfide bridge connects residues C51 and C67. Active-site charge relay system residues include H66 and D110. 2 cysteine pairs are disulfide-bonded: C144-C209 and C175-C188. Catalysis depends on S203, which acts as the Charge relay system.

Belongs to the peptidase S1 family. Granzyme subfamily.

It is found in the secreted. It localises to the cytoplasmic granule. It catalyses the reaction Preferential cleavage: Phe-|-Xaa &gt; Tyr-|-Xaa &gt; Trp-|-Xaa &gt; Leu-|-Xaa.. In terms of biological role, major secreted protease of mast cells with suspected roles in vasoactive peptide generation, extracellular matrix degradation, and regulation of gland secretion. This is Chymase (CMA1) from Canis lupus familiaris (Dog).